A 286-amino-acid chain; its full sequence is Thiamine-monophosphate kinase (286 aa).

Residues aspartate 22, serine 36, threonine 37, and aspartate 38 each coordinate Mg(2+). Residue aspartate 45 coordinates substrate. Residues aspartate 66 and aspartate 111 each contribute to the Mg(2+) site. ATP is bound by residues 110 to 111 (GD) and arginine 136. Residue aspartate 191 coordinates Mg(2+). Residue serine 193 participates in ATP binding. Aspartate 194 contributes to the Mg(2+) binding site. Residue tyrosine 282 coordinates substrate.

Belongs to the thiamine-monophosphate kinase family.

It catalyses the reaction thiamine phosphate + ATP = thiamine diphosphate + ADP. It functions in the pathway cofactor biosynthesis; thiamine diphosphate biosynthesis; thiamine diphosphate from thiamine phosphate: step 1/1. In terms of biological role, catalyzes the ATP-dependent phosphorylation of thiamine-monophosphate (TMP) to form thiamine-pyrophosphate (TPP), the active form of vitamin B1. The sequence is that of Thiamine-monophosphate kinase from Methanospirillum hungatei JF-1 (strain ATCC 27890 / DSM 864 / NBRC 100397 / JF-1).